A 289-amino-acid chain; its full sequence is Protease HtpX homolog (289 aa).

The next 2 membrane-spanning stretches (helical) occupy residues 8–28 and 29–49; these read LALL…VIGG and SSGL…SWYQ. Residue His-132 coordinates Zn(2+). Glu-133 is an active-site residue. Residue His-136 coordinates Zn(2+). 2 helical membrane-spanning segments follow: residues 151 to 171 and 183 to 203; these read VAGA…FGGI and LGVL…QLAI. Glu-208 is a Zn(2+) binding site.

Belongs to the peptidase M48B family. The cofactor is Zn(2+).

The protein localises to the cell inner membrane. The chain is Protease HtpX homolog from Trichormus variabilis (strain ATCC 29413 / PCC 7937) (Anabaena variabilis).